The primary structure comprises 555 residues: Efflux pump FUS6 (555 aa).

The disordered stretch occupies residues 1-23; sequence MASAKDAQPAPEKSLSSDPQPEP. A run of 5 helical transmembrane segments spans residues 31-51, 67-87, 97-117, 130-150, and 159-179; these read WLIF…TSII, LYVW…PIFA, SLTL…GGAH, GIGG…MVSI, and IIGG…GAFA. The N-linked (GlcNAc...) asparagine glycan is linked to Asn181. The next 3 helical transmembrane spans lie at 186 to 206, 225 to 245, and 253 to 273; these read WIFY…GLFL, WGGS…LSWG, and GWQT…FFAY. Asn291 carries N-linked (GlcNAc...) asparagine glycosylation. The next 6 membrane-spanning stretches (helical) occupy residues 297–317, 332–352, 360–380, 393–413, 425–445, and 501–521; these read LLVI…FLPV, VMLF…GITI, VWHF…TLLD, ILFG…ILAS, AWTF…AAVF, and KVVW…CFFV. The N-linked (GlcNAc...) asparagine glycan is linked to Asn545.

Belongs to the major facilitator superfamily. TCR/Tet family.

It is found in the membrane. Functionally, efflux pump; part of the gene cluster that mediates the biosynthesis of the mycotoxin fusarin C. Within the cluster, FUS1, FUS2, FUS8 and FUS9 are sufficient for fusarin production. The other FUS cluster members are not essential for fusarin C biosynthesis. The chain is Efflux pump FUS6 from Gibberella fujikuroi (strain CBS 195.34 / IMI 58289 / NRRL A-6831) (Bakanae and foot rot disease fungus).